Reading from the N-terminus, the 453-residue chain is RuvB-like helicase 1 (453 aa).

Residue 71 to 78 (GGPGTGKT) participates in ATP binding.

Belongs to the RuvB family. May form heterododecamers with RVB2. Component of the SWR1 chromatin remodeling complex, the INO80 chromatin remodeling complex, and of the R2TP complex.

It localises to the nucleus. The catalysed reaction is ATP + H2O = ADP + phosphate + H(+). Functionally, DNA helicase which participates in several chromatin remodeling complexes, including the SWR1 and the INO80 complexes. The SWR1 complex mediates the ATP-dependent exchange of histone H2A for the H2A variant HZT1 leading to transcriptional regulation of selected genes by chromatin remodeling. The INO80 complex remodels chromatin by shifting nucleosomes and is involved in DNA repair. Also involved in pre-rRNA processing. The sequence is that of RuvB-like helicase 1 (RVB1) from Yarrowia lipolytica (strain CLIB 122 / E 150) (Yeast).